Reading from the N-terminus, the 428-residue chain is Metal tolerance protein 10 (428 aa).

Over 1 to 140 (MPLNSYIFFL…EMKKLAKSER (140 aa)) the chain is Cytoplasmic. The chain crosses the membrane as a helical span at residues 141–161 (LAVHISNATNLVLFVAKVYAS). The Vacuolar portion of the chain corresponds to 162–167 (MESRSM). A helical membrane pass occupies residues 168–188 (AVIASTLDSLLDLLSGFILWF). The Cytoplasmic portion of the chain corresponds to 189–209 (TANAMRKPNQFHYPIGKRRMQ). The helical transmembrane segment at 210–230 (PVGIIVFASVMATLGLQVLLE) threads the bilayer. Topologically, residues 231–248 (SGRQLVAKSGIHMNSTEE) are vacuolar. A helical membrane pass occupies residues 249-269 (KWMIGIMVSVTIVKFLLMLYC). Residues 270 to 287 (RGFQNEIVRAYAQDHLFD) are Cytoplasmic-facing. A helical membrane pass occupies residues 288 to 308 (VVTNSIGLATAVLAVKFYWWI). Topologically, residues 309–311 (DPT) are vacuolar. The chain crosses the membrane as a helical span at residues 312–332 (GAILIALYTIATWARTVLENV). Topologically, residues 333-428 (HSLIGRSAPP…FTHRPEHKCN (96 aa)) are cytoplasmic.

The protein belongs to the cation diffusion facilitator (CDF) transporter (TC 2.A.4) family. SLC30A subfamily.

It is found in the vacuole membrane. Its function is as follows. Involved in sequestration of excess metal in the cytoplasm into vacuoles to maintain metal homeostasis. This is Metal tolerance protein 10 (MTP10) from Arabidopsis thaliana (Mouse-ear cress).